An 813-amino-acid chain; its full sequence is MAAPAFPPFRLRFATAATLLGMLGLAGCQTGGYQDSVPPTSGVQPLKGLAQNVSVRRNAMGAPLIESSSFHDALFSLGYVHAGDRIEQMVAMRLLAQGRLAELAGSEALDIDRLMRAANLKQSAAQQYADASPRLKRFFEVYARGVNAYLFRYRDKLPAGLASSGYRPEYWKPEDSALIFCLYAFSQSVNLQEELSALTLAQKAGSDKLAWLLPGAPDEPLAEMEVDKLKGLNLASQLPGLPALAAASQKLADLDLLGSPGSANLALGPQRSRSGKSLLASDSRAAWALSPVQINTSKYQVAGLSLPGLPIVLAGYNGKLAWSSSAVMADNQDLFLEQLRRQGSQLSYLADGKWLPARARSETYFVRGQRPVREVMYDTRHGTLLAQPENASLGLALNLPQFKGDRSLDALFDLTRAKNVERAFDSTREVTAAAVNFVFAEPEHIGWQVSGRYPNRREGQGLLPSPGWDGRYDWDGYADPMLHPYDQDPPAGWIGHANQRSLPRGYGMQLSSTWYYPERAERLAQLAGNGRHDSRSLMALQNDQVTLLANKLKQMFDAPGMAQPLKQAIDALPAGQRDKARDTLARLKAFDGRLSPVSADAALYELFLQEVARQTFLDDLGPESGPAWQAFVGNARLSFSAQADHLLGRDDSPFWDDRNTPQKEDKPAILARSLAGAMEAGIAQLGADRRTWQWGKLHQYRWPAPAYHGLGDAISRSPLAAGGDFTTLALTPFAWGSDFDTHLPASARMIVDFGQAEPLQILTSSGQSGNPASAHYRDGLDAWFKGRFMSLPLQQQNFGRAYGNQRLTLVPGR.

A signal peptide spans 1 to 26 (MAAPAFPPFRLRFATAATLLGMLGLA). The Nucleophile role is filled by S262.

Belongs to the peptidase S45 family. Heterodimer of an alpha subunit and a beta subunit processed from the same precursor.

The protein resides in the periplasm. It carries out the reaction an N-acyl-L-homoserine lactone + H2O = L-homoserine lactone + a carboxylate. Functionally, catalyzes the deacylation of acyl-homoserine lactone (AHL or acyl-HSL), releasing homoserine lactone (HSL) and the corresponding fatty acid. Possesses a specificity for the degradation of long-chain acyl-HSLs (side chains of seven or more carbons in length). The sequence is that of Acyl-homoserine lactone acylase QuiP (quiP) from Pseudomonas putida (strain ATCC 47054 / DSM 6125 / CFBP 8728 / NCIMB 11950 / KT2440).